The sequence spans 526 residues: Light-independent protochlorophyllide reductase subunit B (526 aa).

A [4Fe-4S] cluster-binding site is contributed by Asp36. Asp284 (proton donor) is an active-site residue. 419–420 (GL) lines the substrate pocket.

This sequence belongs to the ChlB/BchB/BchZ family. As to quaternary structure, protochlorophyllide reductase is composed of three subunits; BchL, BchN and BchB. Forms a heterotetramer of two BchB and two BchN subunits. It depends on [4Fe-4S] cluster as a cofactor.

The enzyme catalyses chlorophyllide a + oxidized 2[4Fe-4S]-[ferredoxin] + 2 ADP + 2 phosphate = protochlorophyllide a + reduced 2[4Fe-4S]-[ferredoxin] + 2 ATP + 2 H2O. Its pathway is porphyrin-containing compound metabolism; bacteriochlorophyll biosynthesis (light-independent). Functionally, component of the dark-operative protochlorophyllide reductase (DPOR) that uses Mg-ATP and reduced ferredoxin to reduce ring D of protochlorophyllide (Pchlide) to form chlorophyllide a (Chlide). This reaction is light-independent. The NB-protein (BchN-BchB) is the catalytic component of the complex. In Halorhodospira halophila (strain DSM 244 / SL1) (Ectothiorhodospira halophila (strain DSM 244 / SL1)), this protein is Light-independent protochlorophyllide reductase subunit B.